The sequence spans 306 residues: Glutaminase (306 aa).

Substrate-binding residues include Ser64, Asn115, Glu159, Asn166, Tyr190, Tyr242, and Val260.

This sequence belongs to the glutaminase family. In terms of assembly, homotetramer.

The enzyme catalyses L-glutamine + H2O = L-glutamate + NH4(+). This Aliivibrio salmonicida (strain LFI1238) (Vibrio salmonicida (strain LFI1238)) protein is Glutaminase.